We begin with the raw amino-acid sequence, 233 residues long: Phosducin-like protein C2A9.09 (233 aa).

The Phosducin domain maps to 58 to 212 (EDEEDDEFLQ…DIAALKDPQN (155 aa)). Residues 86-233 (FGSVYPISKP…VNDDLDDDFD (148 aa)) form a thioredoxin fold region. Residues 207–233 (LKDPQNAEDELGKRDSSVNDDLDDDFD) form a disordered region. A phosphoserine mark is found at Ser222 and Ser223. Acidic residues predominate over residues 224 to 233 (VNDDLDDDFD).

This sequence belongs to the phosducin family.

The sequence is that of Phosducin-like protein C2A9.09 from Schizosaccharomyces pombe (strain 972 / ATCC 24843) (Fission yeast).